Consider the following 269-residue polypeptide: Surfeit locus protein 4 (269 aa).

5 consecutive transmembrane segments (helical) span residues 65-85 (LASSFVFLNLLGQLTGCVLVL), 92-112 (YACFGLFGIIALQTIAYSILW), 179-199 (FFSIIQNIVGTALMILVAIGF), 203-223 (LAALTLVVWLFAINVYFNAFW), and 242-262 (TMSVIGGLLLVVALGPGGVSM). The short motif at 266–269 (KKEW) is the Di-lysine motif element.

This sequence belongs to the SURF4 family. As to quaternary structure, found in a complex composed at least of SURF4, TMED2 and TMED10. May interact with LMAN1. Interacts with ZFYVE27 and with KIF5A in a ZFYVE27-dependent manner. Interacts with STING1. Interacts with SAR1B. Interacts with TMEM41B.

Its subcellular location is the endoplasmic reticulum membrane. It is found in the endoplasmic reticulum-Golgi intermediate compartment membrane. The protein resides in the golgi apparatus membrane. In terms of biological role, endoplasmic reticulum cargo receptor that mediates the export of lipoproteins by recruiting cargos into COPII vesicles to facilitate their secretion. Acts as a cargo receptor for lipoproteins bearing both APOB and APOA1, thereby regulating lipoprotein delivery and the maintenance of lipid homeostasis. Synergizes with the GTPase SAR1B to mediate transport of circulating lipoproteins. Promotes the secretion of PCSK9. Also mediates the efficient secretion of erythropoietin (EPO). May also play a role in the maintenance of the architecture of the endoplasmic reticulum-Golgi intermediate compartment and of the Golgi. The sequence is that of Surfeit locus protein 4 from Mus musculus (Mouse).